Here is a 227-residue protein sequence, read N- to C-terminus: ATP synthase F(0) complex subunit a (227 aa).

6 consecutive transmembrane segments (helical) span residues 13–33, 69–89, 98–118, 132–152, 179–199, and 202–222; these read YLLG…LFPA, WALL…LGLL, QLSL…IIGM, EGTP…SLFI, VFVL…VLFL, and LLEV…LSLY.

Belongs to the ATPase A chain family. As to quaternary structure, component of the ATP synthase complex composed at least of ATP5F1A/subunit alpha, ATP5F1B/subunit beta, ATP5MC1/subunit c (homooctomer), MT-ATP6/subunit a, MT-ATP8/subunit 8, ATP5ME/subunit e, ATP5MF/subunit f, ATP5MG/subunit g, ATP5MK/subunit k, ATP5MJ/subunit j, ATP5F1C/subunit gamma, ATP5F1D/subunit delta, ATP5F1E/subunit epsilon, ATP5PF/subunit F6, ATP5PB/subunit b, ATP5PD/subunit d, ATP5PO/subunit OSCP. ATP synthase complex consists of a soluble F(1) head domain (subunits alpha(3) and beta(3)) - the catalytic core - and a membrane F(0) domain - the membrane proton channel (subunits c, a, 8, e, f, g, k and j). These two domains are linked by a central stalk (subunits gamma, delta, and epsilon) rotating inside the F1 region and a stationary peripheral stalk (subunits F6, b, d, and OSCP). Interacts with DNAJC30; interaction is direct.

Its subcellular location is the mitochondrion inner membrane. It carries out the reaction H(+)(in) = H(+)(out). Functionally, subunit a, of the mitochondrial membrane ATP synthase complex (F(1)F(0) ATP synthase or Complex V) that produces ATP from ADP in the presence of a proton gradient across the membrane which is generated by electron transport complexes of the respiratory chain. ATP synthase complex consist of a soluble F(1) head domain - the catalytic core - and a membrane F(1) domain - the membrane proton channel. These two domains are linked by a central stalk rotating inside the F(1) region and a stationary peripheral stalk. During catalysis, ATP synthesis in the catalytic domain of F(1) is coupled via a rotary mechanism of the central stalk subunits to proton translocation. With the subunit c (ATP5MC1), forms the proton-conducting channel in the F(0) domain, that contains two crucial half-channels (inlet and outlet) that facilitate proton movement from the mitochondrial intermembrane space (IMS) into the matrix. Protons are taken up via the inlet half-channel and released through the outlet half-channel, following a Grotthuss mechanism. This Danio rerio (Zebrafish) protein is ATP synthase F(0) complex subunit a.